We begin with the raw amino-acid sequence, 526 residues long: Vitamin B6 transporter bsu1 (526 aa).

The tract at residues 1–53 (MASKIASLFSPSETASKDQHENVAEDLELGTASSQSDGIHETNSEYDEKKREE) is disordered. Basic and acidic residues predominate over residues 38–53 (GIHETNSEYDEKKREE). 12 helical membrane-spanning segments follow: residues 81–101 (WSIVFMFCLMQIYVIWTSNGF), 118–138 (VATLCLSMNILGSGLGPMFLG), 147–167 (KPVYFCSIFVYTVFNISCALP), 173–192 (MIISHFIIGVAGSTALTNVA), 204–224 (AGVPMSLFVWACAGGAIGAPM), 238–257 (WLYYINIIVGGFFLIVILII), 314–330 (LYNFYAYGISYFFLTAI), 349–366 (YLSGFVASTLLFLYQPIQ), 387–407 (FTSALFITLLFPAGMFLFAFT), 413–432 (PWMSPIVGNSMVTVANGHNW), 444–461 (PLLSGSAVAAFTLPSFIG), and 480–501 (WAVATMAFISISIPFIIYTFYF).

The protein belongs to the major facilitator superfamily. CAR1 family.

The protein localises to the membrane. Thiamine-regulated, high affinity import carrier of pyridoxine, pyridoxal and pyridoxamine. Also imports, but does not export, amiloride and so confers sensitivity. The sequence is that of Vitamin B6 transporter bsu1 (bsu1) from Schizosaccharomyces pombe (strain 972 / ATCC 24843) (Fission yeast).